The chain runs to 318 residues: Nucleotide-binding protein Lcho_3490 (318 aa).

35-42 (GISGGGKS) lines the ATP pocket. 84 to 87 (DVRN) contacts GTP.

This sequence belongs to the RapZ-like family.

Displays ATPase and GTPase activities. The chain is Nucleotide-binding protein Lcho_3490 from Leptothrix cholodnii (strain ATCC 51168 / LMG 8142 / SP-6) (Leptothrix discophora (strain SP-6)).